The chain runs to 194 residues: ATP-dependent Clp protease proteolytic subunit (194 aa).

Ser-98 functions as the Nucleophile in the catalytic mechanism. His-123 is an active-site residue.

Belongs to the peptidase S14 family. In terms of assembly, fourteen ClpP subunits assemble into 2 heptameric rings which stack back to back to give a disk-like structure with a central cavity, resembling the structure of eukaryotic proteasomes.

Its subcellular location is the cytoplasm. It carries out the reaction Hydrolysis of proteins to small peptides in the presence of ATP and magnesium. alpha-casein is the usual test substrate. In the absence of ATP, only oligopeptides shorter than five residues are hydrolyzed (such as succinyl-Leu-Tyr-|-NHMec, and Leu-Tyr-Leu-|-Tyr-Trp, in which cleavage of the -Tyr-|-Leu- and -Tyr-|-Trp bonds also occurs).. Cleaves peptides in various proteins in a process that requires ATP hydrolysis. Has a chymotrypsin-like activity. Plays a major role in the degradation of misfolded proteins. The chain is ATP-dependent Clp protease proteolytic subunit from Staphylococcus carnosus (strain TM300).